Here is a 172-residue protein sequence, read N- to C-terminus: Large ribosomal subunit protein uL10 (172 aa).

The protein belongs to the universal ribosomal protein uL10 family. As to quaternary structure, part of the ribosomal stalk of the 50S ribosomal subunit. The N-terminus interacts with L11 and the large rRNA to form the base of the stalk. The C-terminus forms an elongated spine to which L12 dimers bind in a sequential fashion forming a multimeric L10(L12)X complex.

Forms part of the ribosomal stalk, playing a central role in the interaction of the ribosome with GTP-bound translation factors. The sequence is that of Large ribosomal subunit protein uL10 from Rhodospirillum centenum (strain ATCC 51521 / SW).